The chain runs to 199 residues: Mediator of RNA polymerase II transcription subunit 10 (199 aa).

The protein belongs to the Mediator complex subunit 10 family. As to quaternary structure, component of the Mediator complex.

It localises to the nucleus. In terms of biological role, component of the Mediator complex, a coactivator involved in the regulated transcription of nearly all RNA polymerase II-dependent genes. Mediator functions as a bridge to convey information from gene-specific regulatory proteins to the basal RNA polymerase II transcription machinery. Mediator is recruited to promoters by direct interactions with regulatory proteins and serves as a scaffold for the assembly of a functional preinitiation complex with RNA polymerase II and the general transcription factors. This chain is Mediator of RNA polymerase II transcription subunit 10 (NUT2), found in Candida glabrata (strain ATCC 2001 / BCRC 20586 / JCM 3761 / NBRC 0622 / NRRL Y-65 / CBS 138) (Yeast).